The chain runs to 541 residues: Chaperonin GroEL (541 aa).

Residues 29–32, 86–90, Gly-413, and Asp-495 each bind ATP; these read TLGP and DGTTT.

Forms a cylinder of 14 subunits composed of two heptameric rings stacked back-to-back. Interacts with the co-chaperonin GroES.

Its subcellular location is the cytoplasm. The enzyme catalyses ATP + H2O + a folded polypeptide = ADP + phosphate + an unfolded polypeptide.. Its function is as follows. Together with its co-chaperonin GroES, plays an essential role in assisting protein folding. The GroEL-GroES system forms a nano-cage that allows encapsulation of the non-native substrate proteins and provides a physical environment optimized to promote and accelerate protein folding. This is Chaperonin GroEL from Thermoanaerobacter brockii (Thermoanaerobium brockii).